The primary structure comprises 477 residues: MVRVRLAPSPTGTLHIGTARTAVFNWLYAKHEQGAFVLRIEDTDKERSKPEYTQNILEGLQWLGINWDEEPVIQSERVAQHREAIQTLLDRGLAYRCYASETELTAMRDAQKAANQAPRYDNRHRTLTPEQEQAFQTEGREAVIRFRIDDAAEIRWNDLVRGAMSWRGSDLGGDMVIARRAPADQIGDPLYNLVVVVDDASMEITHVIRGEDHIANTAKQLLLYEALGLPLPTFAHAPLILNAEGRKLSKRDGVTSINDFRAMGYTPDAIANYMTLLGWSVPEGMEEQFSLCEAAAVFGFDRVNKAGARFDWDKLNWLNAQVLHGWTADHLLEELTPLWAERGWTPPSEKSWCLDLCALLGPSLTLLKDGVDQAEPFFDRPDLQEDALKQLGIEGAKAAMADLLQRLENNPWDGSDVDQAKAWLGDAAKAADVKKGVVMKSLRAALLGRLQGPDLITTWSLLARIGEDLPRLRRCLG.

Positions Pro8–Thr18 match the 'HIGH' region motif. The 'KMSKS' region motif lies at Lys247 to Arg251. Lys250 is an ATP binding site.

It belongs to the class-I aminoacyl-tRNA synthetase family. Glutamate--tRNA ligase type 1 subfamily. Monomer.

It localises to the cytoplasm. The catalysed reaction is tRNA(Glu) + L-glutamate + ATP = L-glutamyl-tRNA(Glu) + AMP + diphosphate. In terms of biological role, catalyzes the attachment of glutamate to tRNA(Glu) in a two-step reaction: glutamate is first activated by ATP to form Glu-AMP and then transferred to the acceptor end of tRNA(Glu). The protein is Glutamate--tRNA ligase of Synechococcus sp. (strain CC9605).